Here is a 107-residue protein sequence, read N- to C-terminus: Prostate collagen triple helix protein (107 aa).

Residues 47 to 107 form a disordered region; that stretch reads PLIPRTPGSP…PTSPLFPFCP (61 aa). The span at 81-100 shows a compositional bias: low complexity; sequence VGPKGPMLPLGPSGPVGPTS.

In terms of tissue distribution, expressed in prostate and testis. Weakly or not expressed in other tissues. Overexpressed in prostate cancers.

It localises to the cytoplasm. Functionally, may be involved in growth and survival of prostate cancer cells through the TAF-Ibeta pathway. The chain is Prostate collagen triple helix protein (PCOTH) from Homo sapiens (Human).